The sequence spans 279 residues: MKVISSIQELRDQLRGQNRTAFVPTMGNLHEGHLSLMRLARQHGDPVVASIFVNRLQFGPNEDFDKYPRTLQDDIEKLQQENVYVLFAPTERDMYPEPQEYRVLPPDDLGGILEGEFRPGFFAGVCTVVTKLMSCVQPRVAVFGKKDYQQLMIVRRMCQQLALPVEIVAAETVRDEDGLALSSRNRYLTPDERREAPELAKTLQRVRDSVLGGERDLGKLEQHAHTHLAERGWVPDYIAIRRRANLIAPSAAELEAGEPLVVLAAAKLGATRLIDNLEI.

Residue Met26–His33 coordinates ATP. The active-site Proton donor is His33. Residue Gln57 coordinates (R)-pantoate. Gln57 contributes to the beta-alanine binding site. Gly144–Asp147 contacts ATP. (R)-pantoate is bound at residue Gln150. ATP is bound by residues Val173 and Leu181–Arg184.

This sequence belongs to the pantothenate synthetase family. In terms of assembly, homodimer.

It localises to the cytoplasm. The catalysed reaction is (R)-pantoate + beta-alanine + ATP = (R)-pantothenate + AMP + diphosphate + H(+). It functions in the pathway cofactor biosynthesis; (R)-pantothenate biosynthesis; (R)-pantothenate from (R)-pantoate and beta-alanine: step 1/1. In terms of biological role, catalyzes the condensation of pantoate with beta-alanine in an ATP-dependent reaction via a pantoyl-adenylate intermediate. The protein is Pantothenate synthetase of Burkholderia cenocepacia (strain ATCC BAA-245 / DSM 16553 / LMG 16656 / NCTC 13227 / J2315 / CF5610) (Burkholderia cepacia (strain J2315)).